Consider the following 496-residue polypeptide: MLKIKLEKTTFENAKAECGLVFIINKDFDHAWVKNKKLLETFKYEGEGVFLDQENKILYAGVKEDDVHLLRESACLAVRTLKKLAFKSVKVGVYTCDTHSKDNALLENLKALFLGLKLGLYEYDTFKSNKKESVLKEAIVALELHKPCEKTCANSLEKSAKEALKYAEIMTESLNIVRDLVNTPPMIATPVYMAEVAQKVAKENHLEIHVHDEKFLEEKKMNAFLAVNKASLGVNPPRLIHLVYKPKKAKKKIALVGKGLTYDCGGLSLKPADYMVTMKADKGGGSAVIGLLNALAKLGVEAEVHGIIGATENMIGPAAYKPDDILISKEGKSIEVRNTDAEGRLVLADCLSYAQDLSPDVIVDFATLTGACVVGLGEFTSAIMGHNEELKNLFETSGLESGELLAKLPFNRHLKKLIESKIADVCNISSSRYGGAITAGLFLNEFIRDEFKDKWLHIDIAGPAYVEKEWDVNSFGASGAGVRACTAFVEEFLKKA.

Mn(2+)-binding residues include lysine 258 and aspartate 263. Lysine 270 is an active-site residue. The Mn(2+) site is built by aspartate 281, aspartate 340, and glutamate 342. Arginine 344 is a catalytic residue.

It belongs to the peptidase M17 family. Requires Mn(2+) as cofactor.

It is found in the cytoplasm. The catalysed reaction is Release of an N-terminal amino acid, Xaa-|-Yaa-, in which Xaa is preferably Leu, but may be other amino acids including Pro although not Arg or Lys, and Yaa may be Pro. Amino acid amides and methyl esters are also readily hydrolyzed, but rates on arylamides are exceedingly low.. It catalyses the reaction Release of an N-terminal amino acid, preferentially leucine, but not glutamic or aspartic acids.. Presumably involved in the processing and regular turnover of intracellular proteins. Catalyzes the removal of unsubstituted N-terminal amino acids from various peptides. This chain is Probable cytosol aminopeptidase, found in Helicobacter pylori (strain Shi470).